Consider the following 317-residue polypeptide: COP9 signalosome complex subunit 6a (317 aa).

Positions 30–164 (TQLNPPASIC…VTIYESELHV (135 aa)) constitute an MPN domain.

Belongs to the peptidase M67A family. CSN6 subfamily. Component of the CSN complex, probably composed of CSN1, CSN2, CSN3, CSN4, CSN5 (CSN5A or CSN5B), CSN6 (CSN6A or CSN6B), CSN7 and CSN8. Interacts with itself. In the complex, it probably interacts directly with CSN4 and CSN5A or CSN5B. Interacts with CSN7 (via C-terminal tail). Binds to the translation initiation factors TIF3E1.

It localises to the cytoplasm. The protein localises to the nucleus. Component of the COP9 signalosome complex (CSN), a complex involved in various cellular and developmental processes such as photomorphogenesis and auxin and jasmonate responses. The CSN complex is an essential regulator of the ubiquitin (Ubl) conjugation pathway by mediating the deneddylation of the cullin subunits of SCF-type E3 ligase complexes, leading to decrease the Ubl ligase activity of SCF. It is involved in repression of photomorphogenesis in darkness by regulating the activity of COP1-containing Ubl ligase complexes. The complex is also required for degradation of PSIAA6 by regulating the activity of the Ubl ligase SCF-TIR complex. Essential for the structural integrity of the CSN holocomplex. The protein is COP9 signalosome complex subunit 6a of Arabidopsis thaliana (Mouse-ear cress).